Reading from the N-terminus, the 146-residue chain is Probable trivalent organoarsenical cleaving enzyme (146 aa).

The region spanning 2–118 (KYVHVGVNVV…DGNEWEFFYT (117 aa)) is the VOC domain. Fe(2+) is bound by residues His-5 and His-62. Residues Cys-95 and Cys-96 each contribute to the roxarsone (III) site. Position 114 (Glu-114) interacts with Fe(2+).

It to M.tuberculosis Rv2641. It depends on Fe(2+) as a cofactor.

The catalysed reaction is methylarsonous acid + AH2 + O2 = arsenite + methanol + A + H(+). It catalyses the reaction roxarsone (III) + AH2 + O2 = 4-hydroxy-3-nitrocyclohexa-2,5-dien-1-one + arsenite + A + H(+). It carries out the reaction nitarsone (III) + AH2 + O2 = 4-nitrocyclohexa-2,5-dien-1-one + arsenite + A + H(+). The enzyme catalyses 4-aminophenylarsonous acid + AH2 + O2 = 4-aminocyclohexa-2,5-dien-1-one + arsenite + A. In terms of biological role, nonheme iron-dependent dioxygenase that can break carbon-arsenic bonds, playing a role in the detoxification of environmental organoarsenical compounds. Catalyzes the oxygen-dependent demethylation of highly toxic methylarsonous acid (MAs(III)) to arsenite, which can then be exported out of the cell. Can also cleave the C-As bond in several trivalent aromatic arsenicals, including roxarsone (III), nitarsone (III) and (4-aminophenyl)arsonous acid. Organoarsenical degradation by this enzyme is proposed to have a significant impact on the arsenic biogeocycle that maintains a balance between organic and inorganic species. This is Probable trivalent organoarsenical cleaving enzyme (yqcK) from Bacillus subtilis (strain 168).